Consider the following 158-residue polypeptide: 2-C-methyl-D-erythritol 2,4-cyclodiphosphate synthase (158 aa).

A divalent metal cation contacts are provided by D8 and H10. Residues 8-10 (DAH) and 34-35 (HS) each bind 4-CDP-2-C-methyl-D-erythritol 2-phosphate. Residue H42 coordinates a divalent metal cation. Residues 56–58 (DIG), 132–135 (TTTE), and R142 contribute to the 4-CDP-2-C-methyl-D-erythritol 2-phosphate site.

Belongs to the IspF family. As to quaternary structure, homotrimer. Requires a divalent metal cation as cofactor.

The catalysed reaction is 4-CDP-2-C-methyl-D-erythritol 2-phosphate = 2-C-methyl-D-erythritol 2,4-cyclic diphosphate + CMP. Its pathway is isoprenoid biosynthesis; isopentenyl diphosphate biosynthesis via DXP pathway; isopentenyl diphosphate from 1-deoxy-D-xylulose 5-phosphate: step 4/6. In terms of biological role, involved in the biosynthesis of isopentenyl diphosphate (IPP) and dimethylallyl diphosphate (DMAPP), two major building blocks of isoprenoid compounds. Catalyzes the conversion of 4-diphosphocytidyl-2-C-methyl-D-erythritol 2-phosphate (CDP-ME2P) to 2-C-methyl-D-erythritol 2,4-cyclodiphosphate (ME-CPP) with a corresponding release of cytidine 5-monophosphate (CMP). This Nitrosococcus oceani (strain ATCC 19707 / BCRC 17464 / JCM 30415 / NCIMB 11848 / C-107) protein is 2-C-methyl-D-erythritol 2,4-cyclodiphosphate synthase.